Reading from the N-terminus, the 261-residue chain is Thiamine thiazole synthase (261 aa).

Residues S40, 59 to 60, G67, V133, and 159 to 161 contribute to the NAD(+) site; these read ER and HID. Fe cation contacts are provided by D161 and H176. 2 residues coordinate NAD(+): S179 and M226. Residue R236 participates in glycine binding.

This sequence belongs to the THI4 family. Homooctamer; tetramer of dimers. The cofactor is Fe(2+).

It carries out the reaction hydrogen sulfide + glycine + NAD(+) = ADP-5-ethyl-4-methylthiazole-2-carboxylate + nicotinamide + 3 H2O + H(+). It participates in cofactor biosynthesis; thiamine diphosphate biosynthesis. Its function is as follows. Involved in the biosynthesis of the thiazole moiety of thiamine. Catalyzes the conversion of NAD and glycine to adenosine diphosphate 5-(2-hydroxyethyl)-4-methylthiazole-2-carboxylate (ADT), an adenylated thiazole intermediate, using free sulfide as a source of sulfur. The protein is Thiamine thiazole synthase of Methanococcus maripaludis (strain C5 / ATCC BAA-1333).